A 248-amino-acid polypeptide reads, in one-letter code: ATP synthase subunit a, chloroplastic (248 aa).

5 consecutive transmembrane segments (helical) span residues 35–55 (GQVF…SFLG), 94–114 (VPYI…GALI), 133–153 (INTT…AGLS), 202–222 (VFTL…GLFA), and 224–244 (SIQA…AMEG).

The protein belongs to the ATPase A chain family. In terms of assembly, F-type ATPases have 2 components, CF(1) - the catalytic core - and CF(0) - the membrane proton channel. CF(1) has five subunits: alpha(3), beta(3), gamma(1), delta(1), epsilon(1). CF(0) has four main subunits: a, b, b' and c.

Its subcellular location is the plastid. The protein resides in the chloroplast thylakoid membrane. Functionally, key component of the proton channel; it plays a direct role in the translocation of protons across the membrane. The sequence is that of ATP synthase subunit a, chloroplastic from Pyropia yezoensis (Susabi-nori).